The chain runs to 243 residues: UPF0246 protein M6_Spy1787 (243 aa).

This sequence belongs to the UPF0246 family.

This Streptococcus pyogenes serotype M6 (strain ATCC BAA-946 / MGAS10394) protein is UPF0246 protein M6_Spy1787.